Reading from the N-terminus, the 483-residue chain is Glycogen synthase (483 aa).

ADP-alpha-D-glucose is bound at residue lysine 15.

It belongs to the glycosyltransferase 1 family. Bacterial/plant glycogen synthase subfamily.

It catalyses the reaction [(1-&gt;4)-alpha-D-glucosyl](n) + ADP-alpha-D-glucose = [(1-&gt;4)-alpha-D-glucosyl](n+1) + ADP + H(+). It participates in glycan biosynthesis; glycogen biosynthesis. In terms of biological role, synthesizes alpha-1,4-glucan chains using ADP-glucose. The chain is Glycogen synthase from Thioalkalivibrio sulfidiphilus (strain HL-EbGR7).